Reading from the N-terminus, the 806-residue chain is ATP-dependent zinc metalloprotease FTSH 11, chloroplastic/mitochondrial (806 aa).

Residues 1–63 (MSSSTLQASL…RFRPLPCSLR (63 aa)) constitute a chloroplast and mitochondrion transit peptide. The segment covering 106-116 (FVGGEETKSGG) has biased composition (basic and acidic residues). Positions 106–130 (FVGGEETKSGGEEAEVSNGVTEGKE) are disordered. Residues 301 to 321 (LVSTILFTVAVGLVWIMGAAA) form a helical membrane-spanning segment. Residue 402-409 (GAPGTGKT) coordinates ATP. His-620 contributes to the Zn(2+) binding site. Glu-621 is an active-site residue. His-624 and Asp-698 together coordinate Zn(2+).

In the N-terminal section; belongs to the AAA ATPase family. This sequence in the C-terminal section; belongs to the peptidase M41 family. Homooligomer. Requires Zn(2+) as cofactor.

It localises to the mitochondrion inner membrane. The protein resides in the plastid. Its subcellular location is the chloroplast thylakoid membrane. Functionally, probable ATP-dependent zinc metallopeptidase. Involved in the assembly and/or stability of the complexes I and V. Involved in thermotolerance but not in high light stress resistance or in the assembly/stability of the complexes I and V of the mitochondrial oxidative phosphorylation system. In Arabidopsis thaliana (Mouse-ear cress), this protein is ATP-dependent zinc metalloprotease FTSH 11, chloroplastic/mitochondrial (FTSH11).